A 348-amino-acid polypeptide reads, in one-letter code: Dihydroorotase (348 aa).

Residues His-14 and His-16 each contribute to the Zn(2+) site. Substrate is bound by residues 16–18 and Asn-42; that span reads HLR. Positions 100, 137, and 175 each coordinate Zn(2+). Lys-100 carries the N6-carboxylysine modification. Substrate is bound at residue His-137. A substrate-binding site is contributed by Leu-220. Asp-248 serves as a coordination point for Zn(2+). Asp-248 is an active-site residue. Residues His-252 and Ala-264 each contribute to the substrate site.

This sequence belongs to the metallo-dependent hydrolases superfamily. DHOase family. Class II DHOase subfamily. Homodimer. Requires Zn(2+) as cofactor.

It catalyses the reaction (S)-dihydroorotate + H2O = N-carbamoyl-L-aspartate + H(+). The protein operates within pyrimidine metabolism; UMP biosynthesis via de novo pathway; (S)-dihydroorotate from bicarbonate: step 3/3. In terms of biological role, catalyzes the reversible cyclization of carbamoyl aspartate to dihydroorotate. The sequence is that of Dihydroorotase from Pseudomonas aeruginosa (strain LESB58).